Consider the following 751-residue polypeptide: Semaphorin-3C (751 aa).

A signal peptide spans 1 to 21 (MAFRTICVLVGVFICSICVKG). The 484-residue stretch at 28 to 511 (RVYLTFDELR…SNEGVSQVSL (484 aa)) folds into the Sema domain. N-linked (GlcNAc...) asparagine glycosylation occurs at N81. C101 and C112 form a disulfide bridge. Residue N123 is glycosylated (N-linked (GlcNAc...) asparagine). A disulfide bridge connects residues C130 and C139. N-linked (GlcNAc...) asparagine glycans are attached at residues N252 and N268. Intrachain disulfides connect C266–C378 and C290–C338. N-linked (GlcNAc...) asparagine glycosylation occurs at N465. Residues C514 and C532 are joined by a disulfide bond. An Ig-like C2-type domain is found at 571–655 (AYRNAAEIVQ…TENSFKQTIA (85 aa)). Residues N585 and N586 are each glycosylated (N-linked (GlcNAc...) asparagine). Residues C592 and C643 are joined by a disulfide bond. Residues 712-731 (TRQQHQQGDESQKMRGDYGK) are compositionally biased toward basic and acidic residues. Residues 712 to 751 (TRQQHQQGDESQKMRGDYGKLKALINSRKSRNRRNQLPES) form a disordered region.

The protein belongs to the semaphorin family. As to quaternary structure, interacts with PLXND1.

It localises to the secreted. Functionally, binds to plexin family members and plays an important role in the regulation of developmental processes. Required for normal cardiovascular development during embryogenesis. Functions as attractant for growing axons, and thereby plays an important role in axon growth and axon guidance. In Pongo abelii (Sumatran orangutan), this protein is Semaphorin-3C (SEMA3C).